The following is a 107-amino-acid chain: ESAT-6-like protein EsxD (107 aa).

It belongs to the WXG100 family. CFP-10 subfamily.

The protein localises to the secreted. The sequence is that of ESAT-6-like protein EsxD from Mycobacterium tuberculosis (strain ATCC 25618 / H37Rv).